The following is a 147-amino-acid chain: Cytochrome c-type biogenesis protein CcmE (147 aa).

The Cytoplasmic portion of the chain corresponds to 1 to 7 (MTVRQRR). Residues 8–28 (FAMVILVVIGVSIATGLGLKA) traverse the membrane as a helical; Signal-anchor for type II membrane protein segment. Over 29-147 (FQENILFFYN…KTKANTEDKL (119 aa)) the chain is Periplasmic. The heme site is built by H123 and Y127.

This sequence belongs to the CcmE/CycJ family.

It localises to the cell inner membrane. Heme chaperone required for the biogenesis of c-type cytochromes. Transiently binds heme delivered by CcmC and transfers the heme to apo-cytochromes in a process facilitated by CcmF and CcmH. The protein is Cytochrome c-type biogenesis protein CcmE of Nitrosococcus oceani (strain ATCC 19707 / BCRC 17464 / JCM 30415 / NCIMB 11848 / C-107).